Here is a 452-residue protein sequence, read N- to C-terminus: Bifunctional protein GlmU (452 aa).

Residues 1-226 (MVAVAILAAG…SQEILGINDR (226 aa)) are pyrophosphorylase. UDP-N-acetyl-alpha-D-glucosamine-binding positions include 7-10 (LAAG), K21, Q73, and 78-79 (GT). Residue D103 coordinates Mg(2+). G140, E155, N170, and N224 together coordinate UDP-N-acetyl-alpha-D-glucosamine. A Mg(2+)-binding site is contributed by N224. A linker region spans residues 227–247 (LQLADSFRILQERIRQQWMLA). Residues 248–452 (GVTLVDPTSI…ENWSTPTTEQ (205 aa)) form an N-acetyltransferase region. R329 and K347 together coordinate UDP-N-acetyl-alpha-D-glucosamine. Catalysis depends on H359, which acts as the Proton acceptor. Residues Y362 and N373 each coordinate UDP-N-acetyl-alpha-D-glucosamine. Acetyl-CoA contacts are provided by residues A376, 382–383 (NY), A419, and R436.

In the N-terminal section; belongs to the N-acetylglucosamine-1-phosphate uridyltransferase family. It in the C-terminal section; belongs to the transferase hexapeptide repeat family. As to quaternary structure, homotrimer. Mg(2+) is required as a cofactor.

The protein resides in the cytoplasm. The catalysed reaction is alpha-D-glucosamine 1-phosphate + acetyl-CoA = N-acetyl-alpha-D-glucosamine 1-phosphate + CoA + H(+). It carries out the reaction N-acetyl-alpha-D-glucosamine 1-phosphate + UTP + H(+) = UDP-N-acetyl-alpha-D-glucosamine + diphosphate. The protein operates within nucleotide-sugar biosynthesis; UDP-N-acetyl-alpha-D-glucosamine biosynthesis; N-acetyl-alpha-D-glucosamine 1-phosphate from alpha-D-glucosamine 6-phosphate (route II): step 2/2. It functions in the pathway nucleotide-sugar biosynthesis; UDP-N-acetyl-alpha-D-glucosamine biosynthesis; UDP-N-acetyl-alpha-D-glucosamine from N-acetyl-alpha-D-glucosamine 1-phosphate: step 1/1. It participates in bacterial outer membrane biogenesis; LPS lipid A biosynthesis. Its function is as follows. Catalyzes the last two sequential reactions in the de novo biosynthetic pathway for UDP-N-acetylglucosamine (UDP-GlcNAc). The C-terminal domain catalyzes the transfer of acetyl group from acetyl coenzyme A to glucosamine-1-phosphate (GlcN-1-P) to produce N-acetylglucosamine-1-phosphate (GlcNAc-1-P), which is converted into UDP-GlcNAc by the transfer of uridine 5-monophosphate (from uridine 5-triphosphate), a reaction catalyzed by the N-terminal domain. The sequence is that of Bifunctional protein GlmU from Synechococcus sp. (strain ATCC 27144 / PCC 6301 / SAUG 1402/1) (Anacystis nidulans).